Reading from the N-terminus, the 1330-residue chain is Paired amphipathic helix protein Sin3-like 3 (1330 aa).

2 PAH domains span residues 8–78 (QKLT…LPKG) and 94–164 (KRVE…LPDT). Residues 191–246 (IITPHPDHDYGTEHIDQDRERPIKKENKEHMRGTNKENEHRDARDFEPHSKKEQFL) show a composition bias toward basic and acidic residues. The disordered stretch occupies residues 191-281 (IITPHPDHDY…VPSSSTYDEK (91 aa)). Residues 262-277 (ISNQSKLSGAVPSSST) show a composition bias toward polar residues. The 69-residue stretch at 283 to 351 (AMKSYSQDLA…DSFIEFLVQC (69 aa)) folds into the PAH 3 domain. Disordered stretches follow at residues 373–401 (GEGKYPQPSLDNDRDQEHKRDDGLRDRDH), 718–775 (NQNV…GRTS), 789–808 (KNVVTSDEKPESKQAVSIER), 882–906 (QEMAGTSKVEREEGELSPNGDFEED), and 920–1002 (SKAN…EAEC). The span at 383–401 (DNDRDQEHKRDDGLRDRDH) shows a compositional bias: basic and acidic residues. The span at 723–734 (SGSSSAGESEGS) shows a compositional bias: low complexity. Residues 789 to 800 (KNVVTSDEKPES) show a composition bias toward basic and acidic residues. Over residues 920–932 (SKANDSTGNNISG) the composition is skewed to polar residues. Basic and acidic residues-rich tracts occupy residues 933–949 (DRSREGEPSCLETRAEN) and 956–968 (NAARSSEDSRNEY). Acidic residues predominate over residues 980-989 (GGEDPEDDLD). Phosphoserine is present on Ser996.

In terms of assembly, interacts with ERF7 and the histone deacetylase HDA19.

It is found in the nucleus. In terms of biological role, acts as a transcriptional repressor. Interacts with ERF7 to repress genes in abscisic acid and drought stress responses. The heterodimer represses transcription by tethering SNL3 to DNA. The polypeptide is Paired amphipathic helix protein Sin3-like 3 (SNL3) (Arabidopsis thaliana (Mouse-ear cress)).